Reading from the N-terminus, the 932-residue chain is Receptor-like protein 9a (932 aa).

The signal sequence occupies residues 1 to 28 (MLIFTIPQFFFAAWVMVVSLQMQGYISC). The Extracellular segment spans residues 29–888 (IEKERKGLLE…DDETAIDMET (860 aa)). Asn-53, Asn-80, and Asn-90 each carry an N-linked (GlcNAc...) asparagine glycan. LRR repeat units lie at residues 97-122 (FEEL…GYKS), 126-152 (LKKL…AASS), 154-174 (RTLI…ELKD), 175-200 (LSNL…VLHK), 202-222 (HALD…GLCQ), 223-246 (LKNL…CFSS), 247-273 (LTQL…NLDS), 275-295 (EYLS…LIAN), 296-320 (LSKL…ISLQ), 322-345 (KFRL…LQQQ), 346-368 (KDLR…WFLE), 370-393 (YPKL…RLLV), 394-417 (HSLH…IGHV), 418-441 (LPNI…SFSE), 443-466 (KKIF…FCIG), 468-491 (SSLS…PMKL), 492-514 (ESLR…LIHS), 516-535 (GLVF…PSWF), 536-560 (GGFY…TLFN), 561-583 (VSFQ…HFSF), 585-605 (HMGL…STLL), 606-629 (ENVM…VSNR), 631-652 (FLYL…LCEL), 653-676 (KSIR…LNNV), 745-769 (FKFM…LGDF), 770-792 (QRIR…SFSN), 794-817 (TDIE…LTKL), and 819-842 (YIVV…KFLS). A glycan (N-linked (GlcNAc...) asparagine) is linked at Asn-140. N-linked (GlcNAc...) asparagine glycans are attached at residues Asn-261 and Asn-295. N-linked (GlcNAc...) asparagine glycosylation is found at Asn-352 and Asn-380. N-linked (GlcNAc...) asparagine glycosylation is found at Asn-420, Asn-425, and Asn-454. N-linked (GlcNAc...) asparagine glycans are attached at residues Asn-524, Asn-551, and Asn-560. 2 N-linked (GlcNAc...) asparagine glycosylation sites follow: Asn-666 and Asn-675. 2 N-linked (GlcNAc...) asparagine glycosylation sites follow: Asn-776 and Asn-792. N-linked (GlcNAc...) asparagine glycans are attached at residues Asn-824, Asn-829, Asn-860, and Asn-866. The helical transmembrane segment at 889-909 (FYWSLFATYGITWMAFIVFLC) threads the bilayer. Topologically, residues 910–932 (FDSPWRQAWFRLVNVFVSFLKCV) are cytoplasmic.

This sequence belongs to the RLP family.

The protein localises to the cell membrane. The protein is Receptor-like protein 9a of Arabidopsis thaliana (Mouse-ear cress).